The following is a 158-amino-acid chain: NAD(P)H-quinone oxidoreductase subunit J, chloroplastic (158 aa).

Belongs to the complex I 30 kDa subunit family. NDH is composed of at least 16 different subunits, 5 of which are encoded in the nucleus.

The protein resides in the plastid. Its subcellular location is the chloroplast thylakoid membrane. The catalysed reaction is a plastoquinone + NADH + (n+1) H(+)(in) = a plastoquinol + NAD(+) + n H(+)(out). The enzyme catalyses a plastoquinone + NADPH + (n+1) H(+)(in) = a plastoquinol + NADP(+) + n H(+)(out). In terms of biological role, NDH shuttles electrons from NAD(P)H:plastoquinone, via FMN and iron-sulfur (Fe-S) centers, to quinones in the photosynthetic chain and possibly in a chloroplast respiratory chain. The immediate electron acceptor for the enzyme in this species is believed to be plastoquinone. Couples the redox reaction to proton translocation, and thus conserves the redox energy in a proton gradient. In Trachelium caeruleum (Blue throatwort), this protein is NAD(P)H-quinone oxidoreductase subunit J, chloroplastic.